Here is a 356-residue protein sequence, read N- to C-terminus: Carbohydrate sulfotransferase 10 (356 aa).

The Cytoplasmic portion of the chain corresponds to Met-1 to Leu-6. A helical; Signal-anchor for type II membrane protein membrane pass occupies residues Leu-7–Leu-27. The Lumenal segment spans residues Thr-28–Asn-356. The N-linked (GlcNAc...) asparagine glycan is linked to Asn-99. 3'-phosphoadenylyl sulfate contacts are provided by residues Pro-127 to Gln-133 and Arg-189 to Ser-197. Asn-228 and Asn-316 each carry an N-linked (GlcNAc...) asparagine glycan.

Belongs to the sulfotransferase 2 family.

Its subcellular location is the golgi apparatus membrane. The enzyme catalyses 3-O-{beta-D-GlcA-(1-&gt;[3)-alpha-D-Xyl-(1-&gt;3)-beta-D-GlcA-(1-&gt;](n)-4)-beta-D-Xyl-(1-&gt;4)-Rib-ol-P-Rib-ol-P-3-beta-D-GalNAc-(1-&gt;3)-beta-D-GlcNAc-(1-&gt;4)-O-6-P-alpha-D-Man}-L-Thr-[protein] + 3'-phosphoadenylyl sulfate = 3-O-{O-3-S-beta-D-GlcA-(1-&gt;[3)-alpha-D-Xyl-(1-&gt;3)-beta-D-GlcA-(1-&gt;](n)-4)-beta-D-Xyl-(1-&gt;4)-Rib-ol-P-Rib-ol-P-3-beta-D-GalNAc-(1-&gt;3)-beta-D-GlcNAc-(1-&gt;4)-O-6-P-alpha-D-Man}-L-Thr-[protein] + adenosine 3',5'-bisphosphate + H(+). It catalyses the reaction 17beta-estradiol 3-O-(beta-D-glucuronate) + 3'-phosphoadenylyl sulfate = 17beta-estradiol 3-O-(3-sulfo-beta-D-glucuronate) + adenosine 3',5'-bisphosphate + H(+). The catalysed reaction is 17beta-estradiol 3-O-(beta-D-glucuronate) 17-sulfate + 3'-phosphoadenylyl sulfate = 17beta-estradiol 3-O-(3-sulfo-beta-D-glucuronate) 17-sulfate + adenosine 3',5'-bisphosphate + H(+). It carries out the reaction 17beta-estradiol 17-O-(beta-D-glucuronate) + 3'-phosphoadenylyl sulfate = 17beta-estradiol 17-O-(3-sulfo-beta-D-glucuronate) + adenosine 3',5'-bisphosphate + H(+). The enzyme catalyses 16alpha,17beta-estriol 3-O-(beta-D-glucuronate) + 3'-phosphoadenylyl sulfate = 16alpha,17beta-estriol 3-O-(3-sulfo-beta-D-glucuronate) + adenosine 3',5'-bisphosphate + H(+). It catalyses the reaction 16alpha,17beta-estriol 16-O-(beta-D-glucuronate) + 3'-phosphoadenylyl sulfate = 16alpha,17beta-estriol 16-O-(3-sulfo-beta-D-glucuronate) + adenosine 3',5'-bisphosphate + H(+). The catalysed reaction is 16alpha,17beta-estriol 17-O-(beta-D-glucuronate) + 3'-phosphoadenylyl sulfate = 16alpha,17beta-estriol 17-O-(3-sulfo-beta-D-glucuronate) + adenosine 3',5'-bisphosphate + H(+). It carries out the reaction estrone 3-O-(beta-D-glucuronate) + 3'-phosphoadenylyl sulfate = estrone 3-O-(3-sulfo-beta-D-glucuronate) + adenosine 3',5'-bisphosphate + H(+). The enzyme catalyses 3alpha,20alpha-dihydroxy-5beta-pregnane 3-O-(beta-D-glucuronate) + 3'-phosphoadenylyl sulfate = 3alpha,20alpha-dihydroxy-5beta-pregnane 3-O-(3-sulfo-beta-D-glucuronate) + adenosine 3',5'-bisphosphate + H(+). It catalyses the reaction testosterone 17-O-(beta-D-glucuronate) + 3'-phosphoadenylyl sulfate = testosterone 17-O-(3-sulfo-beta-D-glucuronate) + adenosine 3',5'-bisphosphate + H(+). The catalysed reaction is 3beta-androst-5-en-17-one 3-O-(beta-D-glucuronate) + 3'-phosphoadenylyl sulfate = 3beta-androst-5-en-17-one 3-O-(3-sulfo-beta-D-glucuronate) + adenosine 3',5'-bisphosphate + H(+). It carries out the reaction 3alpha,17alpha-dihydroxy-5beta-androstane-11-one-17beta-carboxylate 3-O-(beta-D-glucuronate) + 3'-phosphoadenylyl sulfate = 3alpha,17alpha-dihydroxy-5beta-androstane-11-one-17beta-carboxylate 3-O-(3-sulfo-beta-D-glucuronate) + adenosine 3',5'-bisphosphate + H(+). The enzyme catalyses 3alpha-hydroxyetiocholan-17-one 3-O-(beta-D-glucuronate) + 3'-phosphoadenylyl sulfate = 3alpha-hydroxyetiocholan-17-one 3-O-(3-sulfo-beta-D-glucuronate) + adenosine 3',5'-bisphosphate + H(+). It functions in the pathway steroid metabolism. The protein operates within protein modification; carbohydrate sulfation. In terms of biological role, catalyzes the transfer of sulfate from 3'-phosphoadenylyl sulfate (PAPS) to position 3 of terminal glucuronic acid of both protein- and lipid-linked oligosaccharides. Participates in biosynthesis of HNK-1 carbohydrate structure 3-O-sulfo-beta-D-GlcA-(1-&gt;3)-beta-D-Gal-(1-&gt;4)-D-GlcNAc-R, a sulfated glucuronyl-lactosaminyl residue carried by many neural recognition molecules, which is involved in cell interactions during ontogenetic development and in synaptic plasticity in the adult. May be indirectly involved in synapse plasticity of the hippocampus, via its role in HNK-1 biosynthesis. Sulfates terminal glucuronyl residue of the laminin globular (LG)-domain binding epitope on DAG1/alpha-dystroglycan and prevents further polymerization by LARGE1 glycosyltransferase. Likely defines the chain length of LG epitope, conferring binding specificity to extracellular matrix components. Plays a role in down-regulating the steroid hormones. Sulfates glucuronidated estrogens and androgens with an impact in hormone cycle and fertility. Has a preference for glucuronyl moiety at the 3-hydroxyl group of a sterol ring rather than the 17-hydroxyl group, showing high catalytic efficiency for 17beta-estradiol 3-O-(beta-D-glucuronate) and dehydroepiandrosterone 3-O-(beta-D-glucuronate) hormones. The protein is Carbohydrate sulfotransferase 10 (CHST10) of Pongo abelii (Sumatran orangutan).